The sequence spans 198 residues: Crinkler effector protein BLC01 (198 aa).

The N-terminal stretch at 1-15 (MMVKLICAIVDIAGA) is a signal peptide. The tract at residues 16 to 55 (AFPIDIDTNELVGDFKKVIKAENSRTIACDANDLRLFLAK) is LQLFLAK domain. A DWL domain region spans residues 56–113 (TDGRWLTEFEVQNGVADISVFEELDVVGAPLNMIGLSEETVSSVAITKELVKAKKTPL). The HVLVXXP motif motif lies at 114–119 (HVLVVP).

The protein belongs to the Crinkler effector family.

It localises to the secreted. It is found in the host cell. Secreted effector that elicits necrosis in host plants, a characteristic of plant innate immunity. This is Crinkler effector protein BLC01 from Bremia lactucae (Lettuce downy mildew).